The sequence spans 1072 residues: DNA-directed RNA polymerase subunit beta (1072 aa).

It belongs to the RNA polymerase beta chain family. As to quaternary structure, in plastids the minimal PEP RNA polymerase catalytic core is composed of four subunits: alpha, beta, beta', and beta''. When a (nuclear-encoded) sigma factor is associated with the core the holoenzyme is formed, which can initiate transcription.

The protein resides in the plastid. The protein localises to the chloroplast. The enzyme catalyses RNA(n) + a ribonucleoside 5'-triphosphate = RNA(n+1) + diphosphate. DNA-dependent RNA polymerase catalyzes the transcription of DNA into RNA using the four ribonucleoside triphosphates as substrates. This chain is DNA-directed RNA polymerase subunit beta, found in Barbarea verna (Land cress).